Reading from the N-terminus, the 173-residue chain is RNA pyrophosphohydrolase (173 aa).

Positions 11 to 164 (PYRKCVGIVV…KKHVYMKVVS (154 aa)) constitute a Nudix hydrolase domain. A Nudix box motif is present at residues 52–73 (GGIDEDEKPLDAAYRELYEETG).

The protein belongs to the Nudix hydrolase family. RppH subfamily. A divalent metal cation is required as a cofactor.

Accelerates the degradation of transcripts by removing pyrophosphate from the 5'-end of triphosphorylated RNA, leading to a more labile monophosphorylated state that can stimulate subsequent ribonuclease cleavage. This Bartonella tribocorum (strain CIP 105476 / IBS 506) protein is RNA pyrophosphohydrolase.